Consider the following 435-residue polypeptide: Endosome-associated-trafficking regulator 1 (435 aa).

Residues S18 and S147 each carry the phosphoserine modification. Disordered stretches follow at residues 136-185 (ASRH…TGWS) and 225-251 (ESLP…PSAD). Over residues 173–182 (LLDEEEDEDT) the composition is skewed to acidic residues. Positions 173–198 (LLDEEEDEDTGWSGAYLPSAIEQTHP) are required for interaction with PTPN13. Positions 240–250 (SPASPAGSPSA) are enriched in low complexity. Residues S243 and S247 each carry the phosphoserine modification. A coiled-coil region spans residues 261 to 371 (DRHLRTLQIS…FQRENEALRC (111 aa)).

This sequence belongs to the ENTR1 family. In terms of assembly, found in a complex with ENTR1, PTPN13 and GIT1. Interacts with PTPN13 (via the FERM domain). Interacts (via N-terminus) with GIT1 (via N- and C-terminus); this interaction is direct. Interacts with NOD2. Interacts (via N-terminus) with IFT88. Interacts with VPS35. In terms of processing, phosphorylated. In terms of tissue distribution, expressed in the colon (at protein level).

It is found in the cytoplasm. The protein resides in the early endosome. The protein localises to the endosome. It localises to the recycling endosome. Its subcellular location is the midbody. It is found in the cytoskeleton. The protein resides in the microtubule organizing center. The protein localises to the centrosome. It localises to the cilium basal body. Its function is as follows. Endosome-associated protein that plays a role in membrane receptor sorting, cytokinesis and ciliogenesis. Involved in the endosome-to-plasma membrane trafficking and recycling of SNX27-retromer-dependent cargo proteins, such as GLUT1. Involved in the regulation of cytokinesis; the function may involve PTPN13 and GIT1. Plays a role in the formation of cilia. Involved in cargo protein localization, such as PKD2, at primary cilia. Involved in the presentation of the tumor necrosis factor (TNF) receptor TNFRSF1A on the cell surface, and hence in the modulation of the TNF-induced apoptosis. In Homo sapiens (Human), this protein is Endosome-associated-trafficking regulator 1.